The chain runs to 358 residues: Src kinase-associated phosphoprotein 2 (358 aa).

Residues S5 and S9 each carry the phosphoserine modification. Residues 14 to 64 are homodimerization; that stretch reads PEEIRNLLADVETFVADTLKGENLSKKAKEKRESLIKKIKDVKSVYLQEFQ. At Y75 the chain carries Phosphotyrosine. Residues S87 and S90 each carry the phosphoserine modification. The 104-residue stretch at 116-219 folds into the PH domain; it reads FVIKAGYLEK…WVQQLKFILQ (104 aa). Phosphotyrosine is present on residues Y151 and Y197. S223 carries the post-translational modification Phosphoserine. The tract at residues 232–292 is disordered; sequence ERGELYDDVD…RDSVHHTSGD (61 aa). Acidic residues predominate over residues 255–270; sequence IDDEIYEELPEEEEDT. Phosphotyrosine; by FYN is present on Y260. S272, S282, and S285 each carry phosphoserine. Basic and acidic residues predominate over residues 274–292; it reads KMDEQGKGSRDSVHHTSGD. Residues 296–357 enclose the SH3 domain; sequence DYANFYQGLW…PKAYLMEMYD (62 aa).

This sequence belongs to the SKAP family. As to quaternary structure, interacts with LAT, GRB2, PTK2B and PRAM1. Homodimer. Interacts with FYB1, which is required for SKAP2 protein stability. Interacts with PTPNS1. Part of a complex consisting of SKAP2, FYB1 and PTPNS1. Part of a complex consisting of SKAP2, FYB1 and PIRB. May interact with actin. May interact with FYN, HCK and LYN. Interacts with FASLG. In terms of processing, dephosphorylated on Tyr-75 by PTPN22. Phosphorylated by FYN on Tyr-260. In case of infection with Y.pseudotuberculosis, dephosphorylated by bacterial phosphatase yopH. Expressed in kidney, lung, liver, spleen, bone marrow and testis. Present in T-cells, B-cells, and all cells of the myelomonocytic lineage. Present in all brain regions, with highest levels in neurons from the Purkinje cell layer, hippocampal gyrus, cortex and substantia nigra (at protein level).

It is found in the cytoplasm. May be involved in B-cell and macrophage adhesion processes. In B-cells, may act by coupling the B-cell receptor (BCR) to integrin activation. May play a role in src signaling pathway. The chain is Src kinase-associated phosphoprotein 2 (Skap2) from Mus musculus (Mouse).